The primary structure comprises 418 residues: Gamma-glutamyl phosphate reductase (418 aa).

The protein belongs to the gamma-glutamyl phosphate reductase family.

The protein localises to the cytoplasm. It catalyses the reaction L-glutamate 5-semialdehyde + phosphate + NADP(+) = L-glutamyl 5-phosphate + NADPH + H(+). It participates in amino-acid biosynthesis; L-proline biosynthesis; L-glutamate 5-semialdehyde from L-glutamate: step 2/2. Catalyzes the NADPH-dependent reduction of L-glutamate 5-phosphate into L-glutamate 5-semialdehyde and phosphate. The product spontaneously undergoes cyclization to form 1-pyrroline-5-carboxylate. The polypeptide is Gamma-glutamyl phosphate reductase (Clostridium kluyveri (strain NBRC 12016)).